The chain runs to 155 residues: 6,7-dimethyl-8-ribityllumazine synthase (155 aa).

5-amino-6-(D-ribitylamino)uracil is bound by residues Phe23, 57–59 (AFE), and 81–83 (AVI). 86 to 87 (AT) contacts (2S)-2-hydroxy-3-oxobutyl phosphate. His89 (proton donor) is an active-site residue. Phe114 serves as a coordination point for 5-amino-6-(D-ribitylamino)uracil. Residue Arg128 participates in (2S)-2-hydroxy-3-oxobutyl phosphate binding.

It belongs to the DMRL synthase family.

The catalysed reaction is (2S)-2-hydroxy-3-oxobutyl phosphate + 5-amino-6-(D-ribitylamino)uracil = 6,7-dimethyl-8-(1-D-ribityl)lumazine + phosphate + 2 H2O + H(+). It participates in cofactor biosynthesis; riboflavin biosynthesis; riboflavin from 2-hydroxy-3-oxobutyl phosphate and 5-amino-6-(D-ribitylamino)uracil: step 1/2. In terms of biological role, catalyzes the formation of 6,7-dimethyl-8-ribityllumazine by condensation of 5-amino-6-(D-ribitylamino)uracil with 3,4-dihydroxy-2-butanone 4-phosphate. This is the penultimate step in the biosynthesis of riboflavin. The polypeptide is 6,7-dimethyl-8-ribityllumazine synthase (Pelotomaculum thermopropionicum (strain DSM 13744 / JCM 10971 / SI)).